Consider the following 292-residue polypeptide: 33 kDa chaperonin (292 aa).

2 cysteine pairs are disulfide-bonded: cysteine 230–cysteine 232 and cysteine 263–cysteine 266.

Belongs to the HSP33 family. In terms of processing, under oxidizing conditions two disulfide bonds are formed involving the reactive cysteines. Under reducing conditions zinc is bound to the reactive cysteines and the protein is inactive.

The protein resides in the cytoplasm. Functionally, redox regulated molecular chaperone. Protects both thermally unfolding and oxidatively damaged proteins from irreversible aggregation. Plays an important role in the bacterial defense system toward oxidative stress. This Serratia proteamaculans (strain 568) protein is 33 kDa chaperonin.